Consider the following 267-residue polypeptide: UPF0173 metal-dependent hydrolase THEYE_A0282 (267 aa).

The protein belongs to the UPF0173 family.

The polypeptide is UPF0173 metal-dependent hydrolase THEYE_A0282 (Thermodesulfovibrio yellowstonii (strain ATCC 51303 / DSM 11347 / YP87)).